A 477-amino-acid polypeptide reads, in one-letter code: Putative 4-(hydroxymethyl)benzenesulfonate dehydrogenase TsaD2 (477 aa).

NAD(+) is bound by residues 154-155, 178-181, and 230-231; these read WN, KAAE, and GS. The Proton acceptor role is filled by Glu-252. Leu-253 contacts NAD(+). The Nucleophile role is filled by Cys-286. NAD(+) is bound at residue Glu-381.

This sequence belongs to the aldehyde dehydrogenase family. As to quaternary structure, homodimer.

It catalyses the reaction 4-(hydroxymethyl)benzenesulfonate + NAD(+) = 4-formylbenzenesulfonate + NADH + H(+). Functionally, involved in the toluene-4-sulfonate degradation pathway. Does not discriminate between the sulfonate and the carboxyl substituents and can also be involved in the p-toluenecarboxylate degradation pathway. The sequence is that of Putative 4-(hydroxymethyl)benzenesulfonate dehydrogenase TsaD2 (tsaD2) from Comamonas testosteroni (Pseudomonas testosteroni).